Reading from the N-terminus, the 530-residue chain is Chaperonin GroEL, chloroplastic (530 aa).

ATP is bound by residues 29–32 (TLGP), 86–90 (DGTTT), G414, 480–482 (DAL), and D496.

It belongs to the chaperonin (HSP60) family. In terms of assembly, forms a cylinder of 14 subunits composed of two heptameric rings stacked back-to-back. Interacts with the co-chaperonin GroES.

It is found in the plastid. It localises to the chloroplast. The catalysed reaction is ATP + H2O + a folded polypeptide = ADP + phosphate + an unfolded polypeptide.. In terms of biological role, together with its co-chaperonin GroES, plays an essential role in assisting protein folding. The GroEL-GroES system forms a nano-cage that allows encapsulation of the non-native substrate proteins and provides a physical environment optimized to promote and accelerate protein folding. The protein is Chaperonin GroEL, chloroplastic of Cyanidium caldarium (Red alga).